Consider the following 292-residue polypeptide: UTP--glucose-1-phosphate uridylyltransferase (292 aa).

This sequence belongs to the UDPGP type 2 family. As to quaternary structure, interacts with FloT.

The protein localises to the cell membrane. It localises to the membrane raft. The catalysed reaction is alpha-D-glucose 1-phosphate + UTP + H(+) = UDP-alpha-D-glucose + diphosphate. Its pathway is glycolipid metabolism; diglucosyl-diacylglycerol biosynthesis. Functionally, catalyzes the formation of UDP-glucose from glucose-1-phosphate and UTP. This is an intermediate step in the biosynthesis of diglucosyl-diacylglycerol (Glc2-DAG), i.e. the predominant glycolipid found in B.subtilis membrane, which is also used as a membrane anchor for lipoteichoic acid (LTA). Has a role in the biosynthesis of all phosphate-containing envelope polymers, since UDP-glucose serves as a glucosyl donor not only for the biosynthesis of LTA but also for wall teichoic acids (WTAs). Is required for biofilm formation. This is likely due to another role of UDP-glucose, which might also act as a metabolic signal regulating biofilm formation or may be involved in some unknown biosynthetic pathway essential for biofilm formation, e.g. the synthesis of an exopolysaccharide. This Bacillus subtilis (strain 168) protein is UTP--glucose-1-phosphate uridylyltransferase (gtaB).